The sequence spans 1235 residues: Major DNA-binding protein (1235 aa).

A disordered region spans residues 536–584; it reads GGLDGKGDDGVPGGGAGGGGGRDVSGGPSDGLGGGRGGGGGGDSGGMMG. Positions 545–584 are enriched in gly residues; sequence GVPGGGAGGGGGRDVSGGPSDGLGGGRGGGGGGDSGGMMG. The short motif at 846 to 847 is the Required for filament formation element; it reads FW. Over residues 1214 to 1226 the composition is skewed to gly residues; sequence GVGGSSGGGGGSG. The segment at 1214-1235 is disordered; sequence GVGGSSGGGGGSGLLPAKRSRL. The required for nuclear localization stretch occupies residues 1232 to 1235; it reads RSRL.

This sequence belongs to the herpesviridae major DNA-binding protein family. In terms of assembly, homooligomers. Forms double-helical filaments necessary for the formation of replication compartments within the host nucleus. Interacts with the origin-binding protein. Interacts with the helicase primase complex; this interaction stimulates primer synthesis activity of the helicase-primase complex. Interacts with the DNA polymerase. Interacts with the alkaline exonuclease; this interaction increases its nuclease processivity.

Its subcellular location is the host nucleus. Plays several crucial roles in viral infection. Participates in the opening of the viral DNA origin to initiate replication by interacting with the origin-binding protein. May disrupt loops, hairpins and other secondary structures present on ssDNA to reduce and eliminate pausing of viral DNA polymerase at specific sites during elongation. Promotes viral DNA recombination by performing strand-transfer, characterized by the ability to transfer a DNA strand from a linear duplex to a complementary single-stranded DNA circle. Can also catalyze the renaturation of complementary single strands. Additionally, reorganizes the host cell nucleus, leading to the formation of prereplicative sites and replication compartments. This process is driven by the protein which can form double-helical filaments in the absence of DNA. The chain is Major DNA-binding protein from Homo sapiens (Human).